Reading from the N-terminus, the 445-residue chain is MTRTAPSSLRSLPAEGAAATDLLDTLQRGLAELDAQGLRRVRRTADTACDAHMRVDGRDIVGFASNDYLGLAAHPALVAAFAEGARRYGSGSGGSHLLGGHSRAHATLEDELAGFAGGFSDAPRALYFSTGYMANLAAMTALTGKHATIFSDALNHASLIDGIRLSRANVQVYPHADMAALAALLDASDAETKLIVSDTVFSMDGDIAPLAELVALAERHGAWLVVDDAHGFGVLGPQGRGALAAAALRSPNLIYVGTLGKAAGVAGAFVIAHETVIEWMIQRARSYIFTTAAPPAVAHAVSASLKVIAGDEGDARRAHLAALIERTRALLRMTRWQPVDSHTAVQPLVIGSNDATLAAMRSLDAHGLWVPAIRPPTVPAGTSRLRVSLSAAHSFDDLARLEAALIEASEGQTRRDAEQPPRSLRSLPPEGAAASLGAARRETAA.

Arg40 is a binding site for substrate. Residue 131-132 (GY) coordinates pyridoxal 5'-phosphate. His156 serves as a coordination point for substrate. Residues Ser202, His230, and Thr258 each coordinate pyridoxal 5'-phosphate. N6-(pyridoxal phosphate)lysine is present on Lys261. Thr377 provides a ligand contact to substrate. The tract at residues 408 to 445 (ASEGQTRRDAEQPPRSLRSLPPEGAAASLGAARRETAA) is disordered.

It belongs to the class-II pyridoxal-phosphate-dependent aminotransferase family. BioF subfamily. In terms of assembly, homodimer. The cofactor is pyridoxal 5'-phosphate.

The enzyme catalyses 6-carboxyhexanoyl-[ACP] + L-alanine + H(+) = (8S)-8-amino-7-oxononanoate + holo-[ACP] + CO2. It participates in cofactor biosynthesis; biotin biosynthesis. Catalyzes the decarboxylative condensation of pimeloyl-[acyl-carrier protein] and L-alanine to produce 8-amino-7-oxononanoate (AON), [acyl-carrier protein], and carbon dioxide. In Burkholderia ambifaria (strain MC40-6), this protein is 8-amino-7-oxononanoate synthase.